The sequence spans 759 residues: Cullin-4A (759 aa).

Residues Met-1–Ser-40 form a disordered region. Lys-8 is covalently cross-linked (Glycyl lysine isopeptide (Lys-Gly) (interchain with G-Cter in SUMO2)). Phosphoserine is present on Ser-10. A compositionally biased stretch (low complexity) spans Gly-20–Pro-31. Lys-33 participates in a covalent cross-link: Glycyl lysine isopeptide (Lys-Gly) (interchain with G-Cter in ubiquitin). The 60-residue stretch at Asp-691 to Asp-750 folds into the Cullin neddylation domain. Lys-705 participates in a covalent cross-link: Glycyl lysine isopeptide (Lys-Gly) (interchain with G-Cter in NEDD8).

The protein belongs to the cullin family. Can self-associate. Component of multiple DCX (DDB1-CUL4-X-box) E3 ubiquitin-protein ligase complexes that seem to consist of DDB1, CUL4A or CUL4B, RBX1 and a variable substrate recognition component which seems to belong to a protein family described as DCAF (Ddb1- and Cul4-associated factor) or CDW (CUL4-DDB1-associated WD40-repeat) proteins. Component of the CSA complex (DCX(ERCC8) complex) containing ERCC8, RBX1, DDB1 and CUL4A; the CSA complex interacts with RNA polymerase II; upon UV irradiation it interacts with the COP9 signalosome and preferentially with the hyperphosphorylated form of RNA polymerase II. Component of the DCX(DET1-COP1) complex with the substrate recognition component DET1 and COP1. Component of the DCX(DDB2) complex with the substrate recognition component DDB2. Component of the DCX(DTL) complex with the putative substrate recognition component DTL. Component of DCX complexes part of the DesCEND (destruction via C-end degrons) pathway, which contain either TRPC4AP or DCAF12 as substrate-recognition component. Component of the DCX(AMBRA1) complex with the substrate recognition component AMBRA1. Interacts with DDB1, RBX1, RNF7, CDT1, TIP120A/CAND1, SKP2, CDKN1B, MDM2, TP53 and HOXA9. Interacts with DDB2; the interactions with DDB2 and CAND1 are mutually exclusive. Interacts with DCAF1, DTL, DDA1, DCAF6, DCAF4, DCAF16, DCAF17, DET1, WDTC1, DCAF5, DCAF11, WDR24A, COP1, PAFAH1B1, ERCC8, GRWD1, FBXW5, RBBP7, GNB2, WSB1, WSB2, NUP43, PWP1, FBXW8, ATG16L1, KATNB1, RBBP4, RBBP5, LRWD1 and DCAF8. May interact with WDR26, WDR51B, SNRNP40, WDR61, WDR76, WDR5. Interacts (when neddylated) with ARIH1; leading to activate the E3 ligase activity of ARIH1. The DDB1-CUL4A complex interacts with CRY1. Interacts (unneddylated form) with DCUN1D1, DCUN1D2, DCUN1D3, DCUN1D4 and DCUN1D5; these interactions promote the cullin neddylation. In terms of assembly, (Microbial infection) Interacts with murine cytomegalovirus M48. Post-translationally, neddylated; required for activity of cullin-RING-based E3 ubiquitin-protein ligase complexes. Deneddylated via its interaction with the COP9 signalosome (CSN) complex. In terms of processing, (Microbial infection) Deneddylated by murine cytomegalovirus M48 leading to a S-phase-like environment that is required for efficient replication of the viral genome. Expressed in oocytes (at protein level). In the ovary, also expressed in cumulus cells. Expressed in testis, spleen and kidney.

It participates in protein modification; protein ubiquitination. In terms of biological role, core component of multiple cullin-RING-based E3 ubiquitin-protein ligase complexes which mediate the ubiquitination of target proteins. As a scaffold protein may contribute to catalysis through positioning of the substrate and the ubiquitin-conjugating enzyme. The E3 ubiquitin-protein ligase activity of the complex is dependent on the neddylation of the cullin subunit and is inhibited by the association of the deneddylated cullin subunit with TIP120A/CAND1. The functional specificity of the E3 ubiquitin-protein ligase complex depends on the variable substrate recognition component. DCX(DET1-COP1) directs ubiquitination of JUN. DCX(DDB2) directs ubiquitination of XPC. DCX(DDB2) ubiquitinates histones H3-H4 and is required for efficient histone deposition during replication-coupled (H3.1) and replication-independent (H3.3) nucleosome assembly, probably by facilitating the transfer of H3 from ASF1A/ASF1B to other chaperones involved in histone deposition. DCX(DTL) plays a role in PCNA-dependent polyubiquitination of CDT1 and MDM2-dependent ubiquitination of p53/TP53 in response to radiation-induced DNA damage and during DNA replication. DCX(DTL) directs autoubiquitination of DTL. In association with DDB1 and SKP2 probably is involved in ubiquitination of CDKN1B/p27kip. Is involved in ubiquitination of HOXA9. The DDB1-CUL4A-DTL E3 ligase complex regulates the circadian clock function by mediating the ubiquitination and degradation of CRY1. The DCX(ERCC8) complex (also named CSA complex) plays a role in transcription-coupled repair (TCR). A number of DCX complexes (containing either TRPC4AP or DCAF12 as substrate-recognition component) are part of the DesCEND (destruction via C-end degrons) pathway, which recognizes a C-degron located at the extreme C terminus of target proteins, leading to their ubiquitination and degradation. With CUL4B, contributes to ribosome biogenesis. The DCX(AMBRA1) complex is a master regulator of the transition from G1 to S cell phase by mediating ubiquitination of phosphorylated cyclin-D (CCND1, CCND2 and CCND3). The DCX(AMBRA1) complex also acts as a regulator of Cul5-RING (CRL5) E3 ubiquitin-protein ligase complexes by mediating ubiquitination and degradation of Elongin-C (ELOC) component of CRL5 complexes. The polypeptide is Cullin-4A (Mus musculus (Mouse)).